The sequence spans 140 residues: Nucleoside diphosphate kinase (140 aa).

Lys-11, Phe-59, Arg-87, Thr-93, Arg-104, and Asn-114 together coordinate ATP. Residue His-117 is the Pros-phosphohistidine intermediate of the active site.

The protein belongs to the NDK family. Homotetramer. Requires Mg(2+) as cofactor.

Its subcellular location is the cytoplasm. The enzyme catalyses a 2'-deoxyribonucleoside 5'-diphosphate + ATP = a 2'-deoxyribonucleoside 5'-triphosphate + ADP. It catalyses the reaction a ribonucleoside 5'-diphosphate + ATP = a ribonucleoside 5'-triphosphate + ADP. Functionally, major role in the synthesis of nucleoside triphosphates other than ATP. The ATP gamma phosphate is transferred to the NDP beta phosphate via a ping-pong mechanism, using a phosphorylated active-site intermediate. This Gluconacetobacter diazotrophicus (strain ATCC 49037 / DSM 5601 / CCUG 37298 / CIP 103539 / LMG 7603 / PAl5) protein is Nucleoside diphosphate kinase.